Consider the following 125-residue polypeptide: Monothiol glutaredoxin-S2 (125 aa).

The Glutaredoxin domain maps to 28–124 (AERVGRLVRE…PRLREVGALC (97 aa)). Cys-48 is a binding site for [2Fe-2S] cluster.

The protein belongs to the glutaredoxin family. CC-type subfamily.

It localises to the cytoplasm. In terms of biological role, may only reduce GSH-thiol disulfides, but not protein disulfides. The chain is Monothiol glutaredoxin-S2 (GRXS2) from Oryza sativa subsp. japonica (Rice).